Consider the following 234-residue polypeptide: Sugar fermentation stimulation protein homolog (234 aa).

Belongs to the SfsA family.

This is Sugar fermentation stimulation protein homolog from Shewanella sp. (strain MR-4).